We begin with the raw amino-acid sequence, 224 residues long: MKRFIVRAVLILVSFVLLIQLWIFCSLAWWRTHPVETTMFMRLDYWSDSSKPIQQQWRDYDEISDNFKKAVVAAEDGKFVHHHGFDWEGIQYALEKNEKSGEVVNGGSTISQQLAKNLFLYNQRSLIRKGQEAIATWMMERMWSKQRILEVYMNSVQFGDHLYGVEAASHYYFHRSAQNLTRDQAAFLAALLPNPKYYQENRNDPRFKFKKRFTLKYMRYSEIP.

The chain crosses the membrane as a helical span at residues 9 to 29 (VLILVSFVLLIQLWIFCSLAW).

The protein belongs to the glycosyltransferase 51 family.

It is found in the cell inner membrane. The catalysed reaction is [GlcNAc-(1-&gt;4)-Mur2Ac(oyl-L-Ala-gamma-D-Glu-L-Lys-D-Ala-D-Ala)](n)-di-trans,octa-cis-undecaprenyl diphosphate + beta-D-GlcNAc-(1-&gt;4)-Mur2Ac(oyl-L-Ala-gamma-D-Glu-L-Lys-D-Ala-D-Ala)-di-trans,octa-cis-undecaprenyl diphosphate = [GlcNAc-(1-&gt;4)-Mur2Ac(oyl-L-Ala-gamma-D-Glu-L-Lys-D-Ala-D-Ala)](n+1)-di-trans,octa-cis-undecaprenyl diphosphate + di-trans,octa-cis-undecaprenyl diphosphate + H(+). It functions in the pathway cell wall biogenesis; peptidoglycan biosynthesis. Its function is as follows. Peptidoglycan polymerase that catalyzes glycan chain elongation from lipid-linked precursors. This Acinetobacter baylyi (strain ATCC 33305 / BD413 / ADP1) protein is Biosynthetic peptidoglycan transglycosylase.